The following is a 351-amino-acid chain: MDEKDILRNLREEEEEEEENQSEETKILISSLPWEIDYLGNKLFKYQGYWYYEDVLQSIPNIHSSFQPQETDIVVASFYKSGTTWLKALTFALVQRSKHSLEDHHHPLLSHNPHEIVPYLELDLYLNSSKPDLTKFLSSSSSSSSPRLFSTHMSLDALKLPLKKSPCKVVYVCRNVKDVLVSLWCFLNANKGVEWGDFSQNEKIIRAENYSFKAIFESFCNGVTLHGPFWDHAQSYWRGSLEDPKHFLFMRYEELKAEPRTQVKRLAEFLDCPFTKEEEDSGTVDKILELCSLSNLSSLEINKTGSLGGVDYKTYFRKGQVGDWKSYMTSEMVNKIDMIVEEKLKGSGLKF.

Basic and acidic residues predominate over residues 1–11 (MDEKDILRNLR). A disordered region spans residues 1-24 (MDEKDILRNLREEEEEEEENQSEE). Residues 12–22 (EEEEEEEENQS) are compositionally biased toward acidic residues. 80–85 (KSGTTW) provides a ligand contact to 3'-phosphoadenylyl sulfate. Histidine 152 serves as the catalytic Proton acceptor. 3'-phosphoadenylyl sulfate is bound by residues arginine 174, serine 182, tyrosine 252, and 317–319 (RKG).

The protein belongs to the sulfotransferase 1 family. In terms of tissue distribution, expressed in roots and leaves.

It localises to the cytoplasm. Its function is as follows. Sulfotransferase that utilizes 3'-phospho-5'-adenylyl sulfate (PAPS) as sulfonate donor. No activity with brassinosteroids. This chain is Cytosolic sulfotransferase 9 (STO9), found in Arabidopsis thaliana (Mouse-ear cress).